A 205-amino-acid chain; its full sequence is High frequency lysogenization protein HflD homolog (205 aa).

The protein belongs to the HflD family.

The protein resides in the cytoplasm. It localises to the cell inner membrane. The chain is High frequency lysogenization protein HflD homolog from Shewanella sp. (strain MR-4).